The sequence spans 115 residues: UPF0597 protein NTHI1023 (115 aa).

It belongs to the UPF0597 family.

This is UPF0597 protein NTHI1023 from Haemophilus influenzae (strain 86-028NP).